A 401-amino-acid polypeptide reads, in one-letter code: MVNGSTQYLAHVGELSLKKGNRRQFEVQLERNLTLMLRSINPHVTVRAGRLYLSVPASFEAQTTAEQALSYLLGITGWAAATACPKTMEAITRCAHAEATLAAREGKRTFRIEARRADKRFCRTSSEIAREVGAVIHQSGALSVDLHHPDVVIFIEVREREAFLYGARRRGLRGLPCGVSGRGLLLLSGGIDSPVAGYRMLSRGMHIDCLYFHSYPYTPPEAQKKVEDLAKVLARYGLSTTLTVVSLTDIQKQLQTHAPAPSLTLLLRMCMMRIAEHVAREQRARCLITGESLAQVASQTLENLTVTSACTHLPIFRPLIGADKEDIIRTATEIGTYAISIRPYEDCCTLFAPKHPVLRPEVEEMQKQYQSLMLGPLLEDAFRTRKRTRIYGNYGVQESGE.

The 106-residue stretch at 63 to 168 folds into the THUMP domain; it reads TTAEQALSYL…EREAFLYGAR (106 aa). ATP is bound by residues 186–187, 211–212, arginine 268, glycine 290, and glutamine 299; these read LL and YF.

Belongs to the ThiI family.

It localises to the cytoplasm. It carries out the reaction [ThiI sulfur-carrier protein]-S-sulfanyl-L-cysteine + a uridine in tRNA + 2 reduced [2Fe-2S]-[ferredoxin] + ATP + H(+) = [ThiI sulfur-carrier protein]-L-cysteine + a 4-thiouridine in tRNA + 2 oxidized [2Fe-2S]-[ferredoxin] + AMP + diphosphate. The enzyme catalyses [ThiS sulfur-carrier protein]-C-terminal Gly-Gly-AMP + S-sulfanyl-L-cysteinyl-[cysteine desulfurase] + AH2 = [ThiS sulfur-carrier protein]-C-terminal-Gly-aminoethanethioate + L-cysteinyl-[cysteine desulfurase] + A + AMP + 2 H(+). It functions in the pathway cofactor biosynthesis; thiamine diphosphate biosynthesis. In terms of biological role, catalyzes the ATP-dependent transfer of a sulfur to tRNA to produce 4-thiouridine in position 8 of tRNAs, which functions as a near-UV photosensor. Also catalyzes the transfer of sulfur to the sulfur carrier protein ThiS, forming ThiS-thiocarboxylate. This is a step in the synthesis of thiazole, in the thiamine biosynthesis pathway. The sulfur is donated as persulfide by IscS. This Treponema pallidum (strain Nichols) protein is Probable tRNA sulfurtransferase.